The primary structure comprises 1036 residues: Mitogen-activated protein kinase kinase kinase 21 (1036 aa).

Residues 1–36 (MALRGAAGATDTPVSSAGGAPGGSASSSSTSSGGSA) are disordered. Positions 15–36 (SSAGGAPGGSASSSSTSSGGSA) are enriched in low complexity. The 65-residue stretch at 38–102 (AGAGLWAALY…PANYVAPCRP (65 aa)) folds into the SH3 domain. The Protein kinase domain occupies 124–401 (LELKELIGAG…ALILEQLTAI (278 aa)). Residues 130 to 138 (IGAGGFGQV) and Lys-151 contribute to the ATP site. The active-site Proton acceptor is Asp-263. Phosphothreonine; by autocatalysis is present on Thr-299. Ser-303 carries the post-translational modification Phosphoserine; by autocatalysis and MAP4K1. 2 leucine-zipper regions span residues 425–446 (IQQM…EEEL) and 460–481 (LKRR…ELNI). The tract at residues 517–551 (SDFQHKITVQASPNLDKRRSLNSSSSSPPSSPTMM) is disordered. Residues Ser-528, Ser-543, and Ser-547 each carry the phosphoserine modification. The residue at position 592 (Thr-592) is a Phosphothreonine. Residue Ser-614 is modified to Phosphoserine. A compositionally biased stretch (basic and acidic residues) spans 748 to 763 (AEEPLPKEEKKKREGI). Disordered regions lie at residues 748 to 791 (AEEP…SSPP) and 923 to 954 (PHSH…RSRS).

It belongs to the protein kinase superfamily. STE Ser/Thr protein kinase family. MAP kinase kinase kinase subfamily. As to quaternary structure, homodimer. Interacts with TLR4. Mg(2+) serves as cofactor. In terms of processing, autophosphorylation on serine and threonine residues within the activation loop plays a role in enzyme activation.

It catalyses the reaction L-seryl-[protein] + ATP = O-phospho-L-seryl-[protein] + ADP + H(+). It carries out the reaction L-threonyl-[protein] + ATP = O-phospho-L-threonyl-[protein] + ADP + H(+). Its activity is regulated as follows. Homodimerization via the leucine zipper domains is required for autophosphorylation and subsequent activation. In terms of biological role, negative regulator of TLR4 signaling. Does not activate JNK1/MAPK8 pathway, p38/MAPK14, nor ERK2/MAPK1 pathways. The polypeptide is Mitogen-activated protein kinase kinase kinase 21 (Homo sapiens (Human)).